A 555-amino-acid polypeptide reads, in one-letter code: Membrane protein insertase YidC (555 aa).

The chain crosses the membrane as a helical span at residues 7 to 24 (ILWVIFSMSLVLLYDNWQ). The interval 61 to 81 (TAGAAAPAAPGGAPQAAAQPT) is disordered. A run of 5 helical transmembrane segments spans residues 341-361 (GWLT…HGFL), 364-384 (WGWS…PLSA), 430-450 (LGGC…YWVL), 468-488 (LSVP…MFVQ), and 503-523 (VMMI…AGLV).

The protein belongs to the OXA1/ALB3/YidC family. Type 1 subfamily. In terms of assembly, interacts with the Sec translocase complex via SecD. Specifically interacts with transmembrane segments of nascent integral membrane proteins during membrane integration.

The protein resides in the cell inner membrane. Required for the insertion and/or proper folding and/or complex formation of integral membrane proteins into the membrane. Involved in integration of membrane proteins that insert both dependently and independently of the Sec translocase complex, as well as at least some lipoproteins. Aids folding of multispanning membrane proteins. The sequence is that of Membrane protein insertase YidC from Cupriavidus pinatubonensis (strain JMP 134 / LMG 1197) (Cupriavidus necator (strain JMP 134)).